The chain runs to 139 residues: Putative pre-16S rRNA nuclease (139 aa).

It belongs to the YqgF nuclease family.

It is found in the cytoplasm. Could be a nuclease involved in processing of the 5'-end of pre-16S rRNA. This Streptococcus sanguinis (strain SK36) protein is Putative pre-16S rRNA nuclease.